A 222-amino-acid chain; its full sequence is Exosome complex component Rrp4 (222 aa).

An S1 motif domain is found at Asn-63–His-131. The region spanning Glu-139–Ile-200 is the KH domain.

This sequence belongs to the RRP4 family. As to quaternary structure, component of the archaeal exosome complex. Forms a trimer of Rrp4 and/or Csl4 subunits. The trimer associates with a hexameric ring-like arrangement composed of 3 Rrp41-Rrp42 heterodimers.

It is found in the cytoplasm. Functionally, non-catalytic component of the exosome, which is a complex involved in RNA degradation. Increases the RNA binding and the efficiency of RNA degradation. Confers strong poly(A) specificity to the exosome. This is Exosome complex component Rrp4 from Methanothermus fervidus (strain ATCC 43054 / DSM 2088 / JCM 10308 / V24 S).